We begin with the raw amino-acid sequence, 115 residues long: SGSCTSQVCWNAMPKLRQISEALLKSHIQAYHMMYSKRSLKLRPLQERNRNPSKTDIVYLTPDYCEPNKRHGSLGTHGRRCNKTSTGVNGCRLMCCGRGYQTMLRHVTESCHCRF.

S1 carries O-palmitoleoyl serine; by PORCN lipidation. An intrachain disulfide couples C81 to C96. N82 carries an N-linked (GlcNAc...) asparagine glycan.

The protein belongs to the Wnt family. Palmitoleoylation is required for efficient binding to frizzled receptors. Depalmitoleoylation leads to Wnt signaling pathway inhibition.

It is found in the secreted. Its subcellular location is the extracellular space. It localises to the extracellular matrix. Functionally, ligand for members of the frizzled family of seven transmembrane receptors. Probable developmental protein. May be a signaling molecule which affects the development of discrete regions of tissues. Is likely to signal over only few cell diameters. This Strongylocentrotus purpuratus (Purple sea urchin) protein is Protein Wnt-2 (WNT-2).